The primary structure comprises 308 residues: Cyclin-D4-1 (308 aa).

This sequence belongs to the cyclin family. Cyclin D subfamily. Interacts with CDKA-1, CDKB2-1, KRP4/ICK7, KRP5/ICK3, KRP6/ICK4 and KRP7/ICK5. In terms of tissue distribution, expressed in shoot apical meristem, leaf primordia vascular tissues and tapetum of anthers.

Functionally, may activate cell cycle in the root apical meristem (RAM) and promote embryonic root (radicle) protrusion. This is Cyclin-D4-1 (CYCD4-1) from Arabidopsis thaliana (Mouse-ear cress).